A 219-amino-acid chain; its full sequence is Adenylate kinase (219 aa).

12 to 17 (GAGKGT) is a binding site for ATP. Residues 32–61 (STGDMLRAAVKAGTPIGLQAKAVMDAGELV) are NMP. AMP is bound by residues T33, R38, 59–61 (ELV), 87–90 (GYPR), and Q94. The tract at residues 128 to 165 (GRFSCARCGEGYHDRYKLPKVADICDVCGSKEFKRRPD) is LID. ATP is bound at residue R129. Zn(2+) is bound by residues C132, C135, C152, and C155. R162 and R174 together coordinate AMP. A202 contacts ATP.

This sequence belongs to the adenylate kinase family. Monomer.

Its subcellular location is the cytoplasm. It catalyses the reaction AMP + ATP = 2 ADP. The protein operates within purine metabolism; AMP biosynthesis via salvage pathway; AMP from ADP: step 1/1. In terms of biological role, catalyzes the reversible transfer of the terminal phosphate group between ATP and AMP. Plays an important role in cellular energy homeostasis and in adenine nucleotide metabolism. The protein is Adenylate kinase of Sphingopyxis alaskensis (strain DSM 13593 / LMG 18877 / RB2256) (Sphingomonas alaskensis).